The sequence spans 194 residues: MGLTPSATKPEIAQAPQGIVDPSTGRPVGADDPFFKEINSELADKGFILTTADDLITWARTGSLMWMTFGLACCAVEMMQVSMPRYDVERFGFAPRASPRQSDVMIVAGTLTNKMAPALRKVYDQMPEPRYVISMGSCANGGGYYHFSYAVVRGCDRIVPVDIYVPGCPPTAEALLYGVLLLQKKIRRIGTIER.

The disordered stretch occupies residues 1-26 (MGLTPSATKPEIAQAPQGIVDPSTGR). The [4Fe-4S] cluster site is built by C73, C74, C138, and C168.

This sequence belongs to the complex I 20 kDa subunit family. In terms of assembly, NDH-1 is composed of 14 different subunits. Subunits NuoB, C, D, E, F, and G constitute the peripheral sector of the complex. [4Fe-4S] cluster serves as cofactor.

Its subcellular location is the cell inner membrane. It carries out the reaction a quinone + NADH + 5 H(+)(in) = a quinol + NAD(+) + 4 H(+)(out). Functionally, NDH-1 shuttles electrons from NADH, via FMN and iron-sulfur (Fe-S) centers, to quinones in the respiratory chain. The immediate electron acceptor for the enzyme in this species is believed to be ubiquinone. Couples the redox reaction to proton translocation (for every two electrons transferred, four hydrogen ions are translocated across the cytoplasmic membrane), and thus conserves the redox energy in a proton gradient. This Xanthobacter autotrophicus (strain ATCC BAA-1158 / Py2) protein is NADH-quinone oxidoreductase subunit B.